Consider the following 312-residue polypeptide: Malate dehydrogenase (312 aa).

NAD(+) contacts are provided by residues 12 to 17 (GAGFTG) and D36. Residues R87 and R93 each contribute to the substrate site. NAD(+) contacts are provided by residues N100 and 123-125 (LTN). N125 is a substrate binding site. S149 carries the phosphoserine modification. R156 is a binding site for substrate. Catalysis depends on H180, which acts as the Proton acceptor.

The protein belongs to the LDH/MDH superfamily. MDH type 3 family.

The enzyme catalyses (S)-malate + NAD(+) = oxaloacetate + NADH + H(+). Its function is as follows. Catalyzes the reversible oxidation of malate to oxaloacetate. This chain is Malate dehydrogenase, found in Bacillus licheniformis (strain ATCC 14580 / DSM 13 / JCM 2505 / CCUG 7422 / NBRC 12200 / NCIMB 9375 / NCTC 10341 / NRRL NRS-1264 / Gibson 46).